Reading from the N-terminus, the 27-residue chain is Metalloproteinase inhibitor 1 (27 aa).

Acidic residues predominate over residues 1–12 (IEPERQEEEEEE). The segment at 1 to 27 (IEPERQEEEEEETRQRVRRGQVRQQQQ) is disordered.

Its function is as follows. Metalloproteinase inhibitor, active on a globulinase from L.albus seeds, thermolysin and gelatinase B. This is Metalloproteinase inhibitor 1 from Lupinus albus (White lupine).